We begin with the raw amino-acid sequence, 233 residues long: Sugar fermentation stimulation protein homolog (233 aa).

Belongs to the SfsA family.

This is Sugar fermentation stimulation protein homolog from Chelativorans sp. (strain BNC1).